We begin with the raw amino-acid sequence, 380 residues long: Cytochrome b (380 aa).

The next 4 helical transmembrane spans lie at 34–54 (FGSL…LLAT), 78–99 (WLIR…YLHI), 114–134 (WNTG…GYVL), and 179–199 (FFAL…IHLT). H84 and H98 together coordinate heme b. Heme b contacts are provided by H183 and H197. H202 contacts a ubiquinone. The next 4 helical transmembrane spans lie at 227–247 (LKDI…ALFS), 289–309 (LGGV…PLLH), 321–341 (LSQF…WVGS), and 348–368 (FIII…LLFP).

It belongs to the cytochrome b family. In terms of assembly, the cytochrome bc1 complex contains 11 subunits: 3 respiratory subunits (MT-CYB, CYC1 and UQCRFS1), 2 core proteins (UQCRC1 and UQCRC2) and 6 low-molecular weight proteins (UQCRH/QCR6, UQCRB/QCR7, UQCRQ/QCR8, UQCR10/QCR9, UQCR11/QCR10 and a cleavage product of UQCRFS1). This cytochrome bc1 complex then forms a dimer. The cofactor is heme b.

It localises to the mitochondrion inner membrane. Its function is as follows. Component of the ubiquinol-cytochrome c reductase complex (complex III or cytochrome b-c1 complex) that is part of the mitochondrial respiratory chain. The b-c1 complex mediates electron transfer from ubiquinol to cytochrome c. Contributes to the generation of a proton gradient across the mitochondrial membrane that is then used for ATP synthesis. The protein is Cytochrome b (MT-CYB) of Pinguinus impennis (Great auk).